The primary structure comprises 803 residues: Elongation factor G, mitochondrial (803 aa).

The transit peptide at 1-24 (MVRPAQVRAFSGLARSATSTRLIP) directs the protein to the mitochondrion. The tr-type G domain maps to 102–388 (SKVRNIGIAA…GVCDYLPNPS (287 aa)). GTP-binding positions include 111 to 118 (AHIDSGKT), 186 to 190 (DTPGH), and 240 to 243 (NKMD).

The protein belongs to the TRAFAC class translation factor GTPase superfamily. Classic translation factor GTPase family. EF-G/EF-2 subfamily.

The protein localises to the mitochondrion. The protein operates within protein biosynthesis; polypeptide chain elongation. Mitochondrial GTPase that catalyzes the GTP-dependent ribosomal translocation step during translation elongation. During this step, the ribosome changes from the pre-translocational (PRE) to the post-translocational (POST) state as the newly formed A-site-bound peptidyl-tRNA and P-site-bound deacylated tRNA move to the P and E sites, respectively. Catalyzes the coordinated movement of the two tRNA molecules, the mRNA and conformational changes in the ribosome. The chain is Elongation factor G, mitochondrial (mef1) from Talaromyces marneffei (strain ATCC 18224 / CBS 334.59 / QM 7333) (Penicillium marneffei).